The sequence spans 357 residues: Peptide chain release factor 1 (357 aa).

Q233 carries the N5-methylglutamine modification.

The protein belongs to the prokaryotic/mitochondrial release factor family. In terms of processing, methylated by PrmC. Methylation increases the termination efficiency of RF1.

The protein localises to the cytoplasm. Peptide chain release factor 1 directs the termination of translation in response to the peptide chain termination codons UAG and UAA. This chain is Peptide chain release factor 1, found in Leuconostoc citreum (strain KM20).